Consider the following 558-residue polypeptide: Putative ABC transporter ATP-binding protein SMU_1934c (558 aa).

ABC transporter domains follow at residues 5–246 (IEFK…GIRE) and 295–527 (FDIQ…ANLK). ATP is bound by residues 39–46 (GPSGSGKS) and 328–335 (GKNGAGKS).

This sequence belongs to the ABC transporter superfamily.

It localises to the cell membrane. In terms of biological role, probably part of an ABC transporter complex. Responsible for energy coupling to the transport system. This chain is Putative ABC transporter ATP-binding protein SMU_1934c (sdcBA), found in Streptococcus mutans serotype c (strain ATCC 700610 / UA159).